The following is a 210-amino-acid chain: Endonuclease III (210 aa).

The region spanning 108–127 (FKALIKLPGVGRKTANVVLN) is the HhH domain. [4Fe-4S] cluster contacts are provided by Cys187, Cys194, Cys197, and Cys203.

Belongs to the Nth/MutY family. [4Fe-4S] cluster is required as a cofactor.

It catalyses the reaction 2'-deoxyribonucleotide-(2'-deoxyribose 5'-phosphate)-2'-deoxyribonucleotide-DNA = a 3'-end 2'-deoxyribonucleotide-(2,3-dehydro-2,3-deoxyribose 5'-phosphate)-DNA + a 5'-end 5'-phospho-2'-deoxyribonucleoside-DNA + H(+). In terms of biological role, DNA repair enzyme that has both DNA N-glycosylase activity and AP-lyase activity. The DNA N-glycosylase activity releases various damaged pyrimidines from DNA by cleaving the N-glycosidic bond, leaving an AP (apurinic/apyrimidinic) site. The AP-lyase activity cleaves the phosphodiester bond 3' to the AP site by a beta-elimination, leaving a 3'-terminal unsaturated sugar and a product with a terminal 5'-phosphate. This Rickettsia conorii (strain ATCC VR-613 / Malish 7) protein is Endonuclease III.